The sequence spans 279 residues: Tryptophan synthase alpha chain (279 aa).

Catalysis depends on proton acceptor residues Glu50 and Asp61.

It belongs to the TrpA family. In terms of assembly, tetramer of two alpha and two beta chains.

The enzyme catalyses (1S,2R)-1-C-(indol-3-yl)glycerol 3-phosphate + L-serine = D-glyceraldehyde 3-phosphate + L-tryptophan + H2O. The protein operates within amino-acid biosynthesis; L-tryptophan biosynthesis; L-tryptophan from chorismate: step 5/5. Its function is as follows. The alpha subunit is responsible for the aldol cleavage of indoleglycerol phosphate to indole and glyceraldehyde 3-phosphate. This chain is Tryptophan synthase alpha chain, found in Brucella suis biovar 1 (strain 1330).